The primary structure comprises 274 residues: 2,3,4,5-tetrahydropyridine-2,6-dicarboxylate N-succinyltransferase (274 aa).

The substrate site is built by R104 and D141.

Belongs to the transferase hexapeptide repeat family. As to quaternary structure, homotrimer.

Its subcellular location is the cytoplasm. It carries out the reaction (S)-2,3,4,5-tetrahydrodipicolinate + succinyl-CoA + H2O = (S)-2-succinylamino-6-oxoheptanedioate + CoA. It participates in amino-acid biosynthesis; L-lysine biosynthesis via DAP pathway; LL-2,6-diaminopimelate from (S)-tetrahydrodipicolinate (succinylase route): step 1/3. This is 2,3,4,5-tetrahydropyridine-2,6-dicarboxylate N-succinyltransferase from Shewanella baltica (strain OS155 / ATCC BAA-1091).